Here is a 494-residue protein sequence, read N- to C-terminus: Subtilisin-like serine protease Pen ch 18.0101 (494 aa).

An N-terminal signal peptide occupies residues 1–16 (MKGFLSLTLLPLLVAA). A propeptide spans 17–136 (SPVAVNSIHN…IEKDSEVRTM (120 aa)) (removed in mature form). The Inhibitor I9 domain maps to 43–136 (SYIVVFKKHV…IEKDSEVRTM (94 aa)). The 303-residue stretch at 146-448 (PWGLARISHR…GGSANYTKIL (303 aa)) folds into the Peptidase S8 domain. IgE-binding stretches follow at residues 180 to 198 (VIDT…RANW) and 209 to 231 (EDGN…GVAK). Residues D182 and H214 each act as charge relay system in the active site. N-linked (GlcNAc...) asparagine glycosylation is found at N244 and N280. S376 serves as the catalytic Charge relay system. N443 carries an N-linked (GlcNAc...) asparagine glycan. The propeptide at 454-494 (KAHNAETTVEDRIGIIIDSAEKAFHKELGAIYSEIKDAVSV) is removed in mature form.

This sequence belongs to the peptidase S8 family.

Serine protease. The protein is Subtilisin-like serine protease Pen ch 18.0101 of Penicillium rubens.